Reading from the N-terminus, the 513-residue chain is ATP synthase subunit alpha (513 aa).

169 to 176 contacts ATP; sequence GDRQVGKT.

Belongs to the ATPase alpha/beta chains family. As to quaternary structure, F-type ATPases have 2 components, CF(1) - the catalytic core - and CF(0) - the membrane proton channel. CF(1) has five subunits: alpha(3), beta(3), gamma(1), delta(1), epsilon(1). CF(0) has three main subunits: a(1), b(2) and c(9-12). The alpha and beta chains form an alternating ring which encloses part of the gamma chain. CF(1) is attached to CF(0) by a central stalk formed by the gamma and epsilon chains, while a peripheral stalk is formed by the delta and b chains.

The protein resides in the cell inner membrane. It catalyses the reaction ATP + H2O + 4 H(+)(in) = ADP + phosphate + 5 H(+)(out). Its function is as follows. Produces ATP from ADP in the presence of a proton gradient across the membrane. The alpha chain is a regulatory subunit. This Aeromonas hydrophila subsp. hydrophila (strain ATCC 7966 / DSM 30187 / BCRC 13018 / CCUG 14551 / JCM 1027 / KCTC 2358 / NCIMB 9240 / NCTC 8049) protein is ATP synthase subunit alpha.